A 645-amino-acid chain; its full sequence is Phosphomethylpyrimidine synthase (645 aa).

Residues 1 to 12 (MSHNTVIPTTDI) are compositionally biased toward polar residues. A disordered region spans residues 1–25 (MSHNTVIPTTDISPKPDPARPRKAQ). Residues Asn253, Met282, Tyr311, His347, 367–369 (SRG), 408–411 (DGLR), and Glu447 each bind substrate. Zn(2+) is bound at residue His451. Tyr474 contacts substrate. Position 515 (His515) interacts with Zn(2+). Positions 595, 598, and 603 each coordinate [4Fe-4S] cluster.

It belongs to the ThiC family. Homodimer. It depends on [4Fe-4S] cluster as a cofactor.

The catalysed reaction is 5-amino-1-(5-phospho-beta-D-ribosyl)imidazole + S-adenosyl-L-methionine = 4-amino-2-methyl-5-(phosphooxymethyl)pyrimidine + CO + 5'-deoxyadenosine + formate + L-methionine + 3 H(+). It functions in the pathway cofactor biosynthesis; thiamine diphosphate biosynthesis. In terms of biological role, catalyzes the synthesis of the hydroxymethylpyrimidine phosphate (HMP-P) moiety of thiamine from aminoimidazole ribotide (AIR) in a radical S-adenosyl-L-methionine (SAM)-dependent reaction. This is Phosphomethylpyrimidine synthase from Photorhabdus laumondii subsp. laumondii (strain DSM 15139 / CIP 105565 / TT01) (Photorhabdus luminescens subsp. laumondii).